The chain runs to 369 residues: F-box protein At3g08750 (369 aa).

The 48-residue stretch at 6-53 (CLLLPSLPFELIEEILYKIPAESLIRFKSTCKKWYNLITEKRFMYNHL) folds into the F-box domain.

The chain is F-box protein At3g08750 from Arabidopsis thaliana (Mouse-ear cress).